The primary structure comprises 245 residues: Small ribosomal subunit protein uS3 (245 aa).

Residues 39 to 108 (IRNYIKKNYY…SVFVNVQEVK (70 aa)) enclose the KH type-2 domain.

Belongs to the universal ribosomal protein uS3 family. As to quaternary structure, part of the 30S ribosomal subunit. Forms a tight complex with proteins S10 and S14.

In terms of biological role, binds the lower part of the 30S subunit head. Binds mRNA in the 70S ribosome, positioning it for translation. In Dictyoglomus turgidum (strain DSM 6724 / Z-1310), this protein is Small ribosomal subunit protein uS3.